The chain runs to 356 residues: Alanine racemase (356 aa).

Lys35 acts as the Proton acceptor; specific for D-alanine in catalysis. N6-(pyridoxal phosphate)lysine is present on Lys35. Arg130 serves as a coordination point for substrate. Tyr253 functions as the Proton acceptor; specific for L-alanine in the catalytic mechanism. Met301 contributes to the substrate binding site.

This sequence belongs to the alanine racemase family. The cofactor is pyridoxal 5'-phosphate.

It catalyses the reaction L-alanine = D-alanine. Its pathway is amino-acid biosynthesis; D-alanine biosynthesis; D-alanine from L-alanine: step 1/1. Functionally, catalyzes the interconversion of L-alanine and D-alanine. May also act on other amino acids. The protein is Alanine racemase (alr) of Burkholderia mallei (strain NCTC 10229).